Consider the following 159-residue polypeptide: Ribosomal RNA large subunit methyltransferase H (159 aa).

S-adenosyl-L-methionine is bound by residues L76, G108, and 127-132; that span reads FGLLTF.

Belongs to the RNA methyltransferase RlmH family. As to quaternary structure, homodimer.

The protein localises to the cytoplasm. The catalysed reaction is pseudouridine(1915) in 23S rRNA + S-adenosyl-L-methionine = N(3)-methylpseudouridine(1915) in 23S rRNA + S-adenosyl-L-homocysteine + H(+). Functionally, specifically methylates the pseudouridine at position 1915 (m3Psi1915) in 23S rRNA. The sequence is that of Ribosomal RNA large subunit methyltransferase H from Streptococcus thermophilus (strain ATCC BAA-491 / LMD-9).